The sequence spans 328 residues: MNIWMTVLVLVVKAVVLALCVTLAVAVFLLFMRKFLAYFAYRVGPVKVGPWGVLQPIADVIKMLFKEDIMPEQADPLIYRLAPVIAFFCALGVWVVIPWAPRGSWWSSMADPNAGVLVILAIAAMGVYGTALGGWASQNKYGLLGSMRATAQMISYELAMAMSLLGVILMTGSVSMYDIVDAQRNMINLFPQFLGFLVFYIASLAEAGWTPFDLPESETELVAGYHTDYGGMRFGLFFLTELTHAVNSAVLSTTFFLGGYNPWFGLTMIPGFVWFLLKVILMVFVLYWIKCTFPRFRYDRLMVFGWKVLLPVAALNLVGTAIYVALWA.

The next 8 helical transmembrane spans lie at 11-31, 81-101, 116-136, 154-174, 189-209, 235-257, 269-289, and 308-328; these read VVKAVVLALCVTLAVAVFLLF, LAPVIAFFCALGVWVVIPWAP, VLVILAIAAMGVYGTALGGWA, ISYELAMAMSLLGVILMTGSV, LFPQFLGFLVFYIASLAEAGW, GLFFLTELTHAVNSAVLSTTFFL, IPGFVWFLLKVILMVFVLYWI, and VLLPVAALNLVGTAIYVALWA.

It belongs to the complex I subunit 1 family. As to quaternary structure, NDH-1 is composed of 14 different subunits. Subunits NuoA, H, J, K, L, M, N constitute the membrane sector of the complex.

The protein localises to the cell membrane. The catalysed reaction is a quinone + NADH + 5 H(+)(in) = a quinol + NAD(+) + 4 H(+)(out). NDH-1 shuttles electrons from NADH, via FMN and iron-sulfur (Fe-S) centers, to quinones in the respiratory chain. The immediate electron acceptor for the enzyme in this species is believed to be ubiquinone. Couples the redox reaction to proton translocation (for every two electrons transferred, four hydrogen ions are translocated across the cytoplasmic membrane), and thus conserves the redox energy in a proton gradient. This subunit may bind ubiquinone. This Symbiobacterium thermophilum (strain DSM 24528 / JCM 14929 / IAM 14863 / T) protein is NADH-quinone oxidoreductase subunit H 1.